Here is a 404-residue protein sequence, read N- to C-terminus: Transcriptional repressor OPI1 (404 aa).

Residue S10 is modified to Phosphoserine. A disordered region spans residues 25 to 51; the sequence is QSCRQKSQPSEDVSQADKMPASESSTT. The segment covering 26–37 has biased composition (polar residues); sequence SCRQKSQPSEDV. The segment at 109 to 138 is basic motif; the sequence is KRQKLSRAIAKGKDNLKEYKLNMSIESKKR. Residues 139–160 form a leucine-zipper region; the sequence is LVTCLHLLKLANKQLSDKISCL. Disordered regions lie at residues 170–201, 305–327, and 378–404; these read HPLHKQDGNARTTTGAGEDETSSDEDDDDEEF, LQQQQQKRNKDGDDSASPSSSVT, and QQQQYRQQQQKDGNYVKPSQDNVDSKD. Residues 186 to 201 show a composition bias toward acidic residues; that stretch reads GEDETSSDEDDDDEEF. Positions 200–206 match the FFAT motif; the sequence is EFFDASE. Residues 378–387 are compositionally biased toward low complexity; it reads QQQQYRQQQQ. Polar residues predominate over residues 394-404; it reads KPSQDNVDSKD.

In terms of assembly, interacts with SCS2.

Its subcellular location is the endoplasmic reticulum. It localises to the nucleus. Negative regulator of the transcriptional complex INO2-INO4 in response to phospholipid precursor availability. When precursors become limiting, OPI1 is retained at the endoplasmic reticulum (ER) and INO2-INO4 activates INO1 and other genes required for phospholipid biosynthesis, whereas abundant precursor availability results in targeting of OPI1 to the nucleus to repress transcription of these genes. Binds directly to phosphatidic acid, which is required for ER targeting and may act as sensing mechanism for precursor availability, as phosphatidic acid becomes rapidly depleted upon phospholipid biosynthesis. This chain is Transcriptional repressor OPI1 (OPI1), found in Saccharomyces cerevisiae (strain ATCC 204508 / S288c) (Baker's yeast).